A 762-amino-acid polypeptide reads, in one-letter code: MPTGFQPAESFISFGQPASPPYKGNEASSSSRKGKRKASDTPAPGEKQTKKNKKDKKKKGSKKSQPVDEPDKKDGLPGLSKKQKKALKEQEHKARKSDRKRDNSRGIEAGPRNKKEEQKAAERHAPWTELVDVDLCRDPVDLLTEEINAFYKYVSPTREEFEVRLFMIELITRTINKLWPEAEVTPFGSWQTQLYLPQGDIDLVVAHKYLSDANKQRLLAELGKAMRQANITDVVAIIARARVPIIKFVTLEGKINVDISLNQANGVTAGKIINQYLDALPGARQLILIVKYFLSQRSMNEVYTGGLGSYSVICMVISFLQLHPKLRRSEINPELNLGTLLIEFFELFGRNFNYNDVGISIRRGGFYFSKASRGWMKGQSFLLSIEDPQDKDNDISGGSFGIRQVRNTLGGAYELLSMRLFERAEEMSRNARSGRRSTSWKDKEGDDWSILGGVMGITKETLKQRNELTRIHLEGRLHHKLSIPLGADPKPFVQNYRPPPIISVPSVTDHGRGASSPPPPAESSKRNKKDVGAIMVEDDELESDDDSDSDASSYSSSDSDDSDSDPVAISPRTANSRSTSRVPRADISDTESDGIIEISQPFESSGRGRKPLGDSEPSEDEIEVLSNPPEESRYAGGKGRGKAKVKDAFRPPTPPLPGQEGQLSDLSRPPTPPLPPGEEEEEIDSDEEALRRILAESDGDLGSEDEIGKEWQGAIQVDSDSDEEEKKGRKKRKRGVRSEERRAFWAAKGGNRLGQSSGDMSD.

A disordered region spans residues 1–123 (MPTGFQPAES…KKEEQKAAER (123 aa)). Over residues 50 to 62 (KKNKKDKKKKGSK) the composition is skewed to basic residues. Composition is skewed to basic and acidic residues over residues 65-75 (QPVDEPDKKDG) and 99-123 (RKRD…AAER). Ser189 lines the ATP pocket. Positions 200 and 202 each coordinate Mg(2+). Residues Gly266, Lys291, Ser309, and Tyr310 each contribute to the ATP site. Residues 336-393 (NLGTLLIEFFELFGRNFNYNDVGISIRRGGFYFSKASRGWMKGQSFLLSIEDPQDKDN) form the PAP-associated domain. The disordered stretch occupies residues 482–762 (SIPLGADPKP…LGQSSGDMSD (281 aa)). Acidic residues predominate over residues 536–549 (VEDDELESDDDSDS). The span at 572–581 (RTANSRSTSR) shows a compositional bias: polar residues. Position 610 (Lys610) interacts with ATP. 2 stretches are compositionally biased toward acidic residues: residues 677 to 687 (GEEEEEIDSDE) and 697 to 707 (SDGDLGSEDEI). Polar residues predominate over residues 753 to 762 (LGQSSGDMSD).

The protein belongs to the DNA polymerase type-B-like family. As to quaternary structure, component of the TRAMP complex. Requires Mg(2+) as cofactor. Mn(2+) is required as a cofactor.

Its subcellular location is the nucleus. The protein localises to the nucleolus. The catalysed reaction is RNA(n) + ATP = RNA(n)-3'-adenine ribonucleotide + diphosphate. Its function is as follows. Required for 3' polyadenylation of the 5.8S and 25S rRNAs as a prelude to their degradation in the exosome. Involved in the nucleolar organization to ensure faithful chromosome segregation during mitosis. The protein is Poly(A) RNA polymerase CID14 of Cryptococcus neoformans var. neoformans serotype D (strain JEC21 / ATCC MYA-565) (Filobasidiella neoformans).